A 288-amino-acid polypeptide reads, in one-letter code: Oxaloacetate decarboxylase (288 aa).

Serine 47 contributes to the substrate binding site. Residue aspartate 85 coordinates Mg(2+). Positions 156 and 232 each coordinate substrate.

This sequence belongs to the isocitrate lyase/PEP mutase superfamily. Oxaloacetate decarboxylase family. As to quaternary structure, homotetramer; dimer of dimers. Mg(2+) serves as cofactor.

It carries out the reaction oxaloacetate + H(+) = pyruvate + CO2. Its function is as follows. Catalyzes the decarboxylation of oxaloacetate into pyruvate. Seems to play a role in maintaining cellular concentrations of bicarbonate and pyruvate. This chain is Oxaloacetate decarboxylase, found in Rhodopseudomonas palustris (strain TIE-1).